We begin with the raw amino-acid sequence, 674 residues long: CLK4-associating serine/arginine rich protein (674 aa).

S101 carries the phosphoserine modification. Disordered regions lie at residues 171-232 and 258-674; these read TVAE…GMAD and EKAM…HYRH. The segment covering 182–214 has biased composition (acidic residues); it reads PEEEESAAEEESNSDEDEVIPDIDVEVDVDELN. Over residues 265–283 the composition is skewed to basic residues; sequence RRSRRQRREFREKRLRGRK. 2 positions are modified to phosphoserine: S285 and S294. Positions 290-313 are enriched in basic and acidic residues; the sequence is ARRDSPTYDPYKRSPSESSSESRS. Residue T327 is modified to Phosphothreonine. Phosphoserine occurs at positions 331 and 335. Over residues 356–365 the composition is skewed to pro residues; that stretch reads PPAPPQPGGP. The span at 378–399 shows a compositional bias: low complexity; it reads SSSSSSSSASRTSSSRSSSRSS. Basic residues-rich tracts occupy residues 411–443 and 481–492; these read SGRHARSRSRSWSRSRSRSRRYSRSRSRGRRHS and RGGRGLRHHSSS. Low complexity-rich tracts occupy residues 493-506 and 514-532; these read RSRSSWSLSPSRSR and HSPSPSQSRSRSRSRSQSP. Phosphoserine is present on S547. Residue T573 is modified to Phosphothreonine. A coiled-coil region spans residues 585–647; it reads ALNRQFKADK…ERQYSRQSRS (63 aa). Basic and acidic residues-rich tracts occupy residues 590-617 and 625-641; these read FKADKKAAQEKMIQQEHERQEREDELRA and KERERREKEREEWERQY. Residues 642-651 are compositionally biased toward low complexity; sequence SRQSRSPSPR. A compositionally biased stretch (basic residues) spans 659 to 674; that stretch reads SRRRSRSRSRSPHYRH.

The protein belongs to the splicing factor SR family. Probably interacts with CLK4. In terms of processing, phosphorylated in vitro by CLK4.

The protein resides in the nucleus. In terms of biological role, probably functions as an alternative splicing regulator. May regulate the mRNA splicing of genes such as CLK1. May act by regulating members of the CLK kinase family. This Homo sapiens (Human) protein is CLK4-associating serine/arginine rich protein (CLASRP).